Here is an 85-residue protein sequence, read N- to C-terminus: Small ribosomal subunit protein uS17 (85 aa).

It belongs to the universal ribosomal protein uS17 family. As to quaternary structure, part of the 30S ribosomal subunit.

Its function is as follows. One of the primary rRNA binding proteins, it binds specifically to the 5'-end of 16S ribosomal RNA. This chain is Small ribosomal subunit protein uS17, found in Pasteurella multocida (strain Pm70).